We begin with the raw amino-acid sequence, 595 residues long: Pyranose dehydrogenase (595 aa).

The signal sequence occupies residues 1-21; it reads MARFNARLFSIAILGFQVARS. N95 and N110 each carry an N-linked (GlcNAc...) asparagine glycan. H123 carries the post-translational modification Tele-8alpha-FAD histidine. N195, N337, N367, N502, and N510 each carry an N-linked (GlcNAc...) asparagine glycan. H530 serves as the catalytic Proton acceptor. N541 is a glycosylation site (N-linked (GlcNAc...) asparagine). Residue H574 is part of the active site.

Belongs to the GMC oxidoreductase family. In terms of assembly, monomer. FAD serves as cofactor. In terms of processing, N-glycosylated.

The protein resides in the secreted. The enzyme catalyses pyranose + acceptor = pyranos-2-ulose + reduced acceptor.. The catalysed reaction is pyranose + acceptor = pyranos-3-ulose + reduced acceptor.. It catalyses the reaction pyranose + acceptor = pyranos-2,3-diulose + reduced acceptor.. It carries out the reaction a pyranoside + acceptor = a pyranosid-3-ulose + reduced acceptor.. The enzyme catalyses a pyranoside + acceptor = a pyranosid-3,4-diulose + reduced acceptor.. Functionally, catalyzes the single-oxidation or sequential double oxidation reaction of carbohydrates primarily at carbon-2 and/or carbon-3 with the concomitant reduction of the flavin. The enzyme exhibits a broad sugar substrate specificity, oxidizing different aldopyranoses to the corresponding C-1, C-2, C-3 or C-1,2, C-2,3 and C-3,4 (di)dehydro sugars with substrate-specific regioselectivity. Accepts only a narrow range of electron acceptors such as substituted benzoquinones and complexed metal ions and reacts extremely slowly with O(2) as acceptor. May play a role in the natural recycling of plant matter by oxidizing all major monosaccharides in lignocellulose and by reducing quinone compounds or reactive radical species generated during lignin depolymerization. This is Pyranose dehydrogenase from Agaricus campestris (Field mushroom).